A 254-amino-acid polypeptide reads, in one-letter code: Coproheme decarboxylase (254 aa).

Fe-coproporphyrin III contacts are provided by residues Arg136, Tyr150–Lys154, His177, Gln190, and Ser228. Residue Tyr150 is part of the active site.

Belongs to the ChdC family. Type 1 subfamily. It depends on Fe-coproporphyrin III as a cofactor.

The enzyme catalyses Fe-coproporphyrin III + 2 H2O2 + 2 H(+) = heme b + 2 CO2 + 4 H2O. It carries out the reaction Fe-coproporphyrin III + H2O2 + H(+) = harderoheme III + CO2 + 2 H2O. The catalysed reaction is harderoheme III + H2O2 + H(+) = heme b + CO2 + 2 H2O. It participates in porphyrin-containing compound metabolism; protoheme biosynthesis. Functionally, involved in coproporphyrin-dependent heme b biosynthesis. Catalyzes the decarboxylation of Fe-coproporphyrin III (coproheme) to heme b (protoheme IX), the last step of the pathway. The reaction occurs in a stepwise manner with a three-propionate harderoheme intermediate. The sequence is that of Coproheme decarboxylase from Bacillus subtilis (strain 168).